The sequence spans 259 residues: Small ribosomal subunit protein eS1 (259 aa).

The protein belongs to the eukaryotic ribosomal protein eS1 family. As to quaternary structure, component of the small ribosomal subunit. Mature ribosomes consist of a small (40S) and a large (60S) subunit. The 40S subunit contains about 33 different proteins and 1 molecule of RNA (18S). The 60S subunit contains about 49 different proteins and 3 molecules of RNA (25S, 5.8S and 5S).

It localises to the cytoplasm. The polypeptide is Small ribosomal subunit protein eS1 (Monosiga brevicollis (Choanoflagellate)).